A 444-amino-acid polypeptide reads, in one-letter code: Argininosuccinate synthase (444 aa).

ATP-binding positions include 18 to 26 (AFSGGLDTS) and alanine 44. Tyrosine 100 contributes to the L-citrulline binding site. 2 residues coordinate ATP: glycine 130 and threonine 132. L-aspartate-binding residues include threonine 132, asparagine 136, and aspartate 137. Asparagine 136 provides a ligand contact to L-citrulline. Residue aspartate 137 coordinates ATP. Residues arginine 140 and serine 193 each coordinate L-citrulline. Aspartate 195 lines the ATP pocket. Positions 202, 204, and 281 each coordinate L-citrulline.

This sequence belongs to the argininosuccinate synthase family. Type 2 subfamily. As to quaternary structure, homotetramer.

It localises to the cytoplasm. It catalyses the reaction L-citrulline + L-aspartate + ATP = 2-(N(omega)-L-arginino)succinate + AMP + diphosphate + H(+). The protein operates within amino-acid biosynthesis; L-arginine biosynthesis; L-arginine from L-ornithine and carbamoyl phosphate: step 2/3. In Mannheimia succiniciproducens (strain KCTC 0769BP / MBEL55E), this protein is Argininosuccinate synthase.